The sequence spans 150 residues: SsrA-binding protein (150 aa).

It belongs to the SmpB family.

It is found in the cytoplasm. Required for rescue of stalled ribosomes mediated by trans-translation. Binds to transfer-messenger RNA (tmRNA), required for stable association of tmRNA with ribosomes. tmRNA and SmpB together mimic tRNA shape, replacing the anticodon stem-loop with SmpB. tmRNA is encoded by the ssrA gene; the 2 termini fold to resemble tRNA(Ala) and it encodes a 'tag peptide', a short internal open reading frame. During trans-translation Ala-aminoacylated tmRNA acts like a tRNA, entering the A-site of stalled ribosomes, displacing the stalled mRNA. The ribosome then switches to translate the ORF on the tmRNA; the nascent peptide is terminated with the 'tag peptide' encoded by the tmRNA and targeted for degradation. The ribosome is freed to recommence translation, which seems to be the essential function of trans-translation. The sequence is that of SsrA-binding protein from Borreliella burgdorferi (strain ATCC 35210 / DSM 4680 / CIP 102532 / B31) (Borrelia burgdorferi).